Reading from the N-terminus, the 843-residue chain is Protein P (843 aa).

A terminal protein domain (TP) region spans residues 1–177; that stretch reads MPLSYQHFRK…FCGSPYSWEQ (177 aa). The tract at residues 178–346 is spacer; the sequence is ELQHGRLVFQ…YCLTHIVNLL (169 aa). Disordered stretches follow at residues 224–273 and 288–316; these read GLQP…SSTS and HLST…RSQS. Over residues 288-299 the composition is skewed to polar residues; that stretch reads HLSTSKRQSSSG. Residues 347 to 690 are polymerase/reverse transcriptase domain (RT); it reads EDWGPCTEHG…YLNLYPVARQ (344 aa). One can recognise a Reverse transcriptase domain in the interval 357-600; sequence EHNIRIPRTP…YSLNFMGYVI (244 aa). Mg(2+) contacts are provided by Asp429, Asp551, and Asp552.

This sequence belongs to the hepadnaviridae P protein family.

It catalyses the reaction DNA(n) + a 2'-deoxyribonucleoside 5'-triphosphate = DNA(n+1) + diphosphate. The catalysed reaction is Endonucleolytic cleavage to 5'-phosphomonoester.. With respect to regulation, activated by host HSP70 and HSP40 in vitro to be able to bind the epsilon loop of the pgRNA. Because deletion of the RNase H region renders the protein partly chaperone-independent, the chaperones may be needed indirectly to relieve occlusion of the RNA-binding site by this domain. Inhibited by several reverse-transcriptase inhibitors: Lamivudine, Adefovir and Entecavir. In terms of biological role, multifunctional enzyme that converts the viral RNA genome into dsDNA in viral cytoplasmic capsids. This enzyme displays a DNA polymerase activity that can copy either DNA or RNA templates, and a ribonuclease H (RNase H) activity that cleaves the RNA strand of RNA-DNA heteroduplexes in a partially processive 3'- to 5'-endonucleasic mode. Neo-synthesized pregenomic RNA (pgRNA) are encapsidated together with the P protein, and reverse-transcribed inside the nucleocapsid. Initiation of reverse-transcription occurs first by binding the epsilon loop on the pgRNA genome, and is initiated by protein priming, thereby the 5'-end of (-)DNA is covalently linked to P protein. Partial (+)DNA is synthesized from the (-)DNA template and generates the relaxed circular DNA (RC-DNA) genome. After budding and infection, the RC-DNA migrates in the nucleus, and is converted into a plasmid-like covalently closed circular DNA (cccDNA). The activity of P protein does not seem to be necessary for cccDNA generation, and is presumably released from (+)DNA by host nuclear DNA repair machinery. This Homo sapiens (Human) protein is Protein P.